We begin with the raw amino-acid sequence, 276 residues long: Diaminopimelate epimerase (276 aa).

Substrate contacts are provided by Asn-13, Gln-46, and Asn-66. The active-site Proton donor is the Cys-75. Substrate-binding positions include Gly-76 to Asn-77, Asn-159, Asn-192, and Glu-210 to Arg-211. The Proton acceptor role is filled by Cys-219. Residue Gly-220–Thr-221 participates in substrate binding.

It belongs to the diaminopimelate epimerase family. As to quaternary structure, homodimer.

It localises to the cytoplasm. It carries out the reaction (2S,6S)-2,6-diaminopimelate = meso-2,6-diaminopimelate. It functions in the pathway amino-acid biosynthesis; L-lysine biosynthesis via DAP pathway; DL-2,6-diaminopimelate from LL-2,6-diaminopimelate: step 1/1. In terms of biological role, catalyzes the stereoinversion of LL-2,6-diaminopimelate (L,L-DAP) to meso-diaminopimelate (meso-DAP), a precursor of L-lysine and an essential component of the bacterial peptidoglycan. The sequence is that of Diaminopimelate epimerase from Aeromonas hydrophila subsp. hydrophila (strain ATCC 7966 / DSM 30187 / BCRC 13018 / CCUG 14551 / JCM 1027 / KCTC 2358 / NCIMB 9240 / NCTC 8049).